A 273-amino-acid chain; its full sequence is Large ribosomal subunit protein uL2 (273 aa).

2 disordered regions span residues 28 to 55 and 222 to 273; these read TPEK…RHRG and GMAM…SKRK. The segment covering 255 to 273 has biased composition (basic residues); that stretch reads YKTRKKRRVSDRFIVSKRK.

The protein belongs to the universal ribosomal protein uL2 family. As to quaternary structure, part of the 50S ribosomal subunit. Forms a bridge to the 30S subunit in the 70S ribosome.

In terms of biological role, one of the primary rRNA binding proteins. Required for association of the 30S and 50S subunits to form the 70S ribosome, for tRNA binding and peptide bond formation. It has been suggested to have peptidyltransferase activity; this is somewhat controversial. Makes several contacts with the 16S rRNA in the 70S ribosome. The chain is Large ribosomal subunit protein uL2 from Treponema pallidum (strain Nichols).